The primary structure comprises 204 residues: N-(5'-phosphoribosyl)anthranilate isomerase (204 aa).

This sequence belongs to the TrpF family.

It catalyses the reaction N-(5-phospho-beta-D-ribosyl)anthranilate = 1-(2-carboxyphenylamino)-1-deoxy-D-ribulose 5-phosphate. The protein operates within amino-acid biosynthesis; L-tryptophan biosynthesis; L-tryptophan from chorismate: step 3/5. In Geobacter sp. (strain M21), this protein is N-(5'-phosphoribosyl)anthranilate isomerase.